Consider the following 124-residue polypeptide: Ribonuclease pancreatic (124 aa).

Residues 1 to 13 show a composition bias toward basic and acidic residues; it reads KESAAAKFERQHM. Positions 1–24 are disordered; sequence KESAAAKFERQHMDSSTSSASSSN. Residues K7 and R10 each contribute to the substrate site. H12 (proton acceptor) is an active-site residue. 4 disulfide bridges follow: C26–C84, C40–C95, C58–C110, and C65–C72. Substrate-binding positions include 41–45, K66, and R85; that span reads KPVNT. H119 acts as the Proton donor in catalysis.

The protein belongs to the pancreatic ribonuclease family. Monomer. Interacts with and forms tight 1:1 complexes with RNH1. Dimerization of two such complexes may occur. Interaction with RNH1 inhibits this protein. As to expression, pancreas.

It is found in the secreted. The catalysed reaction is an [RNA] containing cytidine + H2O = an [RNA]-3'-cytidine-3'-phosphate + a 5'-hydroxy-ribonucleotide-3'-[RNA].. It catalyses the reaction an [RNA] containing uridine + H2O = an [RNA]-3'-uridine-3'-phosphate + a 5'-hydroxy-ribonucleotide-3'-[RNA].. In terms of biological role, endonuclease that catalyzes the cleavage of RNA on the 3' side of pyrimidine nucleotides. Acts on single-stranded and double-stranded RNA. The polypeptide is Ribonuclease pancreatic (RNASE1) (Connochaetes taurinus (Blue wildebeest)).